A 463-amino-acid chain; its full sequence is Exodeoxyribonuclease 7 large subunit (463 aa).

The protein belongs to the XseA family. Heterooligomer composed of large and small subunits.

Its subcellular location is the cytoplasm. It catalyses the reaction Exonucleolytic cleavage in either 5'- to 3'- or 3'- to 5'-direction to yield nucleoside 5'-phosphates.. Its function is as follows. Bidirectionally degrades single-stranded DNA into large acid-insoluble oligonucleotides, which are then degraded further into small acid-soluble oligonucleotides. This is Exodeoxyribonuclease 7 large subunit from Bordetella pertussis (strain Tohama I / ATCC BAA-589 / NCTC 13251).